Here is a 556-residue protein sequence, read N- to C-terminus: Urocanate hydratase (556 aa).

Residues 52 to 53, Q130, 176 to 178, E196, R201, 242 to 243, 263 to 267, 273 to 274, and Y322 contribute to the NAD(+) site; these read GG, GMG, NA, QTSAH, and YL. Residue C410 is part of the active site. G492 contributes to the NAD(+) binding site.

This sequence belongs to the urocanase family. It depends on NAD(+) as a cofactor.

The protein resides in the cytoplasm. The enzyme catalyses 4-imidazolone-5-propanoate = trans-urocanate + H2O. It participates in amino-acid degradation; L-histidine degradation into L-glutamate; N-formimidoyl-L-glutamate from L-histidine: step 2/3. Catalyzes the conversion of urocanate to 4-imidazolone-5-propionate. This chain is Urocanate hydratase, found in Shewanella sediminis (strain HAW-EB3).